We begin with the raw amino-acid sequence, 459 residues long: Phosphomethylpyrimidine synthase (459 aa).

Substrate contacts are provided by residues N80, M109, Y139, H175, 195-197 (SRG), 236-239 (DSLR), and E275. H279 is a Zn(2+) binding site. Position 302 (Y302) interacts with substrate. Position 343 (H343) interacts with Zn(2+). C423, C426, and C431 together coordinate [4Fe-4S] cluster.

The protein belongs to the ThiC family. It depends on [4Fe-4S] cluster as a cofactor.

It catalyses the reaction 5-amino-1-(5-phospho-beta-D-ribosyl)imidazole + S-adenosyl-L-methionine = 4-amino-2-methyl-5-(phosphooxymethyl)pyrimidine + CO + 5'-deoxyadenosine + formate + L-methionine + 3 H(+). It participates in cofactor biosynthesis; thiamine diphosphate biosynthesis. Catalyzes the synthesis of the hydroxymethylpyrimidine phosphate (HMP-P) moiety of thiamine from aminoimidazole ribotide (AIR) in a radical S-adenosyl-L-methionine (SAM)-dependent reaction. This chain is Phosphomethylpyrimidine synthase, found in Prochlorococcus marinus (strain MIT 9211).